The primary structure comprises 63 residues: Cytochrome c oxidase subunit 5C (63 aa).

Residues 16-34 (VVKEICIGLTLGLVAGGLW) traverse the membrane as a helical segment.

Belongs to the cytochrome c oxidase subunit 5C family.

It localises to the mitochondrion inner membrane. Its function is as follows. This protein is one of the nuclear-coded polypeptide chains of cytochrome c oxidase, the terminal oxidase in mitochondrial electron transport. This chain is Cytochrome c oxidase subunit 5C (COX5C), found in Oryza sativa subsp. japonica (Rice).